The following is a 127-amino-acid chain: MRHRKSGRQLNRNSSHRQAMFRNMAGSLVRHEIIKTTLPKAKELRRVVEPLITLAKTDSVANRRLAFARTRDNEIVAKLFNELGPRFASRAGGYTRILKCGFRAGDNAPMAYIELVDRSEKTEAAAE.

This sequence belongs to the bacterial ribosomal protein bL17 family. As to quaternary structure, part of the 50S ribosomal subunit. Contacts protein L32.

This is Large ribosomal subunit protein bL17 from Salmonella paratyphi A (strain AKU_12601).